The following is a 100-amino-acid chain: Putative pterin-4-alpha-carbinolamine dehydratase (100 aa).

The protein belongs to the pterin-4-alpha-carbinolamine dehydratase family.

The catalysed reaction is (4aS,6R)-4a-hydroxy-L-erythro-5,6,7,8-tetrahydrobiopterin = (6R)-L-erythro-6,7-dihydrobiopterin + H2O. This is Putative pterin-4-alpha-carbinolamine dehydratase from Allorhizobium ampelinum (strain ATCC BAA-846 / DSM 112012 / S4) (Agrobacterium vitis (strain S4)).